Reading from the N-terminus, the 239-residue chain is Leucine-rich repeat-containing protein 57 (239 aa).

Residue glycine 2 is the site of N-myristoyl glycine attachment. LRR repeat units lie at residues 39 to 60 (NLRT…LIGK), 63 to 84 (LLKS…ICNL), 86 to 107 (KLET…FGQL), 109 to 131 (ALKT…CSLR), 132 to 153 (HLDV…VGEL), 154 to 175 (QVIE…ISCC), 177 to 197 (RLKI…PQSI), and 202 to 222 (QICL…RELE).

Its subcellular location is the membrane. This is Leucine-rich repeat-containing protein 57 (LRRC57) from Homo sapiens (Human).